The chain runs to 310 residues: Haloalkane dehalogenase (310 aa).

The 111-residue stretch at 30 to 140 folds into the AB hydrolase-1 domain; it reads PVVLFLHGNP…PMPTWQDFHH (111 aa). The active-site Nucleophile is the Asp103. The Proton donor role is filled by Glu127. The Proton acceptor role is filled by His280.

It belongs to the haloalkane dehalogenase family. Type 2 subfamily. As to quaternary structure, monomer.

It carries out the reaction 1-haloalkane + H2O = a halide anion + a primary alcohol + H(+). Its function is as follows. Catalyzes hydrolytic cleavage of carbon-halogen bonds in halogenated aliphatic compounds, leading to the formation of the corresponding primary alcohols, halide ions and protons. The chain is Haloalkane dehalogenase from Bradyrhizobium diazoefficiens (strain JCM 10833 / BCRC 13528 / IAM 13628 / NBRC 14792 / USDA 110).